Here is a 465-residue protein sequence, read N- to C-terminus: Protein CitXG (465 aa).

Positions 1–182 (MQHFFTTFST…QSLAQNHDFA (182 aa)) are apo-citrate lyase phosphoribosyl-dephospho-CoA transferase. The tract at residues 183 to 465 (EHIGEQVYLA…TIFFLSFRGN (283 aa)) is 2-(5''-triphosphoribosyl)-3'-dephosphocoenzyme-A synthase.

This sequence in the N-terminal section; belongs to the CitX family. The protein in the C-terminal section; belongs to the CitG/MdcB family.

It catalyses the reaction apo-[citrate lyase ACP] + 2'-(5''-triphospho-alpha-D-ribosyl)-3'-dephospho-CoA = holo-[citrate lyase ACP] + diphosphate. It carries out the reaction 3'-dephospho-CoA + ATP = 2'-(5''-triphospho-alpha-D-ribosyl)-3'-dephospho-CoA + adenine. Bifunctional enzyme that catalyzes formation of 2-(5''-triphosphoribosyl)-3'-dephosphocoenzyme-A, and then the transfer of this prosthetic group precursor to the apo-acyl carrier protein (gamma chain) of the citrate lyase to yield the holo-acyl carrier protein. This chain is Protein CitXG (citXG), found in Haemophilus influenzae (strain ATCC 51907 / DSM 11121 / KW20 / Rd).